We begin with the raw amino-acid sequence, 252 residues long: Phosphoribosyl-ATP pyrophosphatase (252 aa).

It belongs to the PRA-PH family.

The protein localises to the cytoplasm. The catalysed reaction is 1-(5-phospho-beta-D-ribosyl)-ATP + H2O = 1-(5-phospho-beta-D-ribosyl)-5'-AMP + diphosphate + H(+). The protein operates within amino-acid biosynthesis; L-histidine biosynthesis; L-histidine from 5-phospho-alpha-D-ribose 1-diphosphate: step 2/9. The protein is Phosphoribosyl-ATP pyrophosphatase of Magnetococcus marinus (strain ATCC BAA-1437 / JCM 17883 / MC-1).